Consider the following 341-residue polypeptide: D-erythrose-4-phosphate dehydrogenase (341 aa).

NAD(+) is bound at residue 12–13; it reads RI. Residues 154 to 156, R200, 213 to 214, and R236 contribute to the substrate site; these read SCT and TK. Catalysis depends on C155, which acts as the Nucleophile. An NAD(+)-binding site is contributed by N318.

The protein belongs to the glyceraldehyde-3-phosphate dehydrogenase family. Epd subfamily. In terms of assembly, homotetramer.

It is found in the cytoplasm. It catalyses the reaction D-erythrose 4-phosphate + NAD(+) + H2O = 4-phospho-D-erythronate + NADH + 2 H(+). Its pathway is cofactor biosynthesis; pyridoxine 5'-phosphate biosynthesis; pyridoxine 5'-phosphate from D-erythrose 4-phosphate: step 1/5. Catalyzes the NAD-dependent conversion of D-erythrose 4-phosphate to 4-phosphoerythronate. This chain is D-erythrose-4-phosphate dehydrogenase, found in Edwardsiella ictaluri (strain 93-146).